The chain runs to 1596 residues: A-kinase anchor protein SPHKAP (1596 aa).

Disordered regions lie at residues 214-233 (KHGR…RSVS), 242-319 (ASEQ…TPKQ), 389-432 (DNSE…GHPA), 462-481 (SGEE…DQGE), and 760-809 (EQSD…SSSS). Polar residues predominate over residues 292–306 (TLCTSSNSQKLSRTY). Positions 462–479 (SGEEYECEDEEEESETDQ) are enriched in acidic residues. The segment at 829–846 (FAEDLATTVVSMATELAA) is PKA-RII subunit binding domain. Disordered stretches follow at residues 958-1022 (VVDT…ISKQ), 1282-1310 (VGER…ENSC), and 1328-1443 (VPLI…SSLG). Residues 959-971 (VDTSKSGQSSRSR) are compositionally biased toward polar residues. The span at 1333 to 1356 (IEPDQREEASEEKGGVETHHREAS) shows a compositional bias: basic and acidic residues. Polar residues predominate over residues 1357–1372 (HQTQQQSGKGSETATK). Composition is skewed to low complexity over residues 1398–1409 (LSASSEESGSGS) and 1430–1443 (LSEG…SSLG).

This sequence belongs to the AKAP110 family.

It localises to the cytoplasm. Its function is as follows. Anchoring protein that mediates the subcellular compartmentation of cAMP-dependent protein kinase (PKA type II). In Danio rerio (Zebrafish), this protein is A-kinase anchor protein SPHKAP (sphkap).